The chain runs to 424 residues: Histidine--tRNA ligase (424 aa).

This sequence belongs to the class-II aminoacyl-tRNA synthetase family. In terms of assembly, homodimer.

The protein resides in the cytoplasm. It carries out the reaction tRNA(His) + L-histidine + ATP = L-histidyl-tRNA(His) + AMP + diphosphate + H(+). The protein is Histidine--tRNA ligase of Escherichia coli O139:H28 (strain E24377A / ETEC).